A 31-amino-acid polypeptide reads, in one-letter code: MESVAYILVLTMALSVIFFAIAFREPPRIQK.

The helical transmembrane segment at 3–23 threads the bilayer; the sequence is SVAYILVLTMALSVIFFAIAF.

This sequence belongs to the PsbT family. As to quaternary structure, PSII is composed of 1 copy each of membrane proteins PsbA, PsbB, PsbC, PsbD, PsbE, PsbF, PsbH, PsbI, PsbJ, PsbK, PsbL, PsbM, PsbT, PsbX, PsbY, PsbZ, Psb30/Ycf12, peripheral proteins PsbO, CyanoQ (PsbQ), PsbU, PsbV and a large number of cofactors. It forms dimeric complexes.

Its subcellular location is the cellular thylakoid membrane. Found at the monomer-monomer interface of the photosystem II (PS II) dimer, plays a role in assembly and dimerization of PSII. PSII is a light-driven water plastoquinone oxidoreductase, using light energy to abstract electrons from H(2)O, generating a proton gradient subsequently used for ATP formation. This chain is Photosystem II reaction center protein T, found in Microcystis aeruginosa (strain NIES-843 / IAM M-2473).